The primary structure comprises 562 residues: Dihydroxy-acid dehydratase (562 aa).

Aspartate 80 contributes to the Mg(2+) binding site. Cysteine 121 provides a ligand contact to [2Fe-2S] cluster. Aspartate 122 and lysine 123 together coordinate Mg(2+). Position 123 is an N6-carboxylysine (lysine 123). Cysteine 194 is a binding site for [2Fe-2S] cluster. A Mg(2+)-binding site is contributed by glutamate 446. Serine 472 (proton acceptor) is an active-site residue.

Belongs to the IlvD/Edd family. As to quaternary structure, homodimer. The cofactor is [2Fe-2S] cluster. Mg(2+) is required as a cofactor.

The catalysed reaction is (2R)-2,3-dihydroxy-3-methylbutanoate = 3-methyl-2-oxobutanoate + H2O. The enzyme catalyses (2R,3R)-2,3-dihydroxy-3-methylpentanoate = (S)-3-methyl-2-oxopentanoate + H2O. The protein operates within amino-acid biosynthesis; L-isoleucine biosynthesis; L-isoleucine from 2-oxobutanoate: step 3/4. It functions in the pathway amino-acid biosynthesis; L-valine biosynthesis; L-valine from pyruvate: step 3/4. Functionally, functions in the biosynthesis of branched-chain amino acids. Catalyzes the dehydration of (2R,3R)-2,3-dihydroxy-3-methylpentanoate (2,3-dihydroxy-3-methylvalerate) into 2-oxo-3-methylpentanoate (2-oxo-3-methylvalerate) and of (2R)-2,3-dihydroxy-3-methylbutanoate (2,3-dihydroxyisovalerate) into 2-oxo-3-methylbutanoate (2-oxoisovalerate), the penultimate precursor to L-isoleucine and L-valine, respectively. This chain is Dihydroxy-acid dehydratase, found in Staphylococcus aureus (strain bovine RF122 / ET3-1).